Reading from the N-terminus, the 297-residue chain is Formylmethanofuran--tetrahydromethanopterin formyltransferase (297 aa).

It belongs to the FTR family. As to quaternary structure, homotetramer.

It localises to the cytoplasm. It catalyses the reaction N-formylmethanofuran + 5,6,7,8-tetrahydromethanopterin + H(+) = N(5)-formyl-5,6,7,8-tetrahydromethanopterin + methanofuran. It participates in one-carbon metabolism; methanogenesis from CO(2); 5,10-methenyl-5,6,7,8-tetrahydromethanopterin from CO(2): step 2/3. In terms of biological role, catalyzes the reversible transfer of a formyl group from formylmethanofuran (formyl-MFR) to tetrahydromethanopterin (H(4)MPT) to produce 5-formyl tetrahydromethanopterin (5-formyl-H(4)MPT) and methanofuran (MFR). This is Formylmethanofuran--tetrahydromethanopterin formyltransferase from Methanothermus fervidus (strain ATCC 43054 / DSM 2088 / JCM 10308 / V24 S).